The sequence spans 246 residues: Aquaporin AqpM (246 aa).

The Cytoplasmic portion of the chain corresponds to methionine 1–glutamate 11. The helical transmembrane segment at phenylalanine 12–isoleucine 32 threads the bilayer. At alanine 33–glycine 45 the chain is on the extracellular side. Residues isoleucine 46–isoleucine 66 traverse the membrane as a helical segment. The Cytoplasmic portion of the chain corresponds to alanine 67–serine 69. A helical transmembrane segment spans residues isoleucine 70–tryptophan 90. The short motif at asparagine 82 to alanine 84 is the NPA 1 element. The Extracellular portion of the chain corresponds to serine 91 to tyrosine 103. A helical transmembrane segment spans residues isoleucine 104–isoleucine 124. Residues threonine 125–glutamine 145 are Cytoplasmic-facing. Residues alanine 146–valine 166 traverse the membrane as a helical segment. Residues aspartate 167–lysine 172 lie on the Extracellular side of the membrane. The helical transmembrane segment at glycine 173–isoleucine 193 threads the bilayer. At threonine 194–asparagine 217 the chain is on the cytoplasmic side. Residues asparagine 199–alanine 201 carry the NPA 2 motif. The helical transmembrane segment at leucine 218 to leucine 238 threads the bilayer. Residues threonine 239–glutamate 246 lie on the Extracellular side of the membrane.

It belongs to the MIP/aquaporin (TC 1.A.8) family. As to quaternary structure, homotetramer.

It is found in the cell membrane. Channel that permits osmotically driven movement of water in both directions. It mediates rapid entry or exit of water in response to abrupt changes in osmolarity. Also exhibits a transient but reproducible increase in the initial glycerol flux. The sequence is that of Aquaporin AqpM (aqpM) from Methanothermobacter thermautotrophicus (strain ATCC 29096 / DSM 1053 / JCM 10044 / NBRC 100330 / Delta H) (Methanobacterium thermoautotrophicum).